Consider the following 386-residue polypeptide: Short-chain dehydrogenase/reductase family 42E member 1 (386 aa).

The Proton acceptor role is filled by tyrosine 150. Lysine 154 contributes to the NAD(+) binding site. Helical transmembrane passes span 279–299 (FPLS…FFIS) and 363–383 (YLIW…SWLP).

Belongs to the 3-beta-HSD family.

The protein resides in the membrane. The chain is Short-chain dehydrogenase/reductase family 42E member 1 (sdr42e1) from Xenopus laevis (African clawed frog).